The following is a 685-amino-acid chain: Keratin, type II cytoskeletal 2 epidermal (685 aa).

The disordered stretch occupies residues 1 to 20 (MSCQISCKSRRGGGGGGGGG). Residues 1–196 (MSCQISCKSR…DPEIQNVKSQ (196 aa)) are head. An Asymmetric dimethylarginine modification is found at arginine 22. Residues serine 25 and serine 28 each carry the phosphoserine modification. Arginine 52 carries the omega-N-methylarginine modification. A Phosphoserine modification is found at serine 64. The interval 197–232 (EREQIKTLNNKFASFIDTVRFLEQQNQVLHTKWELL) is coil 1A. The IF rod domain maps to 197–511 (EREQIKTLNN…KLLEGEECRM (315 aa)). The interval 233 to 251 (QQLDVGTRTTNLDPVFQAY) is linker 1. The segment at 252 to 343 (IGILKKQVDR…TLYDTELSQL (92 aa)) is coil 1B. The segment at 344 to 367 (QQNVTDTNVILSMDNNRNLDLDSI) is linker 12. Residues 368 to 507 (IAEVQSQYEI…ATYRKLLEGE (140 aa)) are coil 2. The interval 508-685 (ECRMSGDFSD…CGSGVTFSFR (178 aa)) is tail. The tract at residues 532-685 (VASKAGFGSG…CGSGVTFSFR (154 aa)) is disordered. The span at 538 to 678 (FGSGGQSSGG…GSGSGEGCGS (141 aa)) shows a compositional bias: gly residues. Omega-N-methylarginine occurs at positions 554, 588, 603, and 653.

Belongs to the intermediate filament family. Heterotetramer of two type I and two type II keratins. Associates with KRT10.

Its subcellular location is the cytoplasm. In terms of biological role, probably contributes to terminal cornification. Associated with keratinocyte activation, proliferation and keratinization. Required for maintenance of corneocytes and keratin filaments in suprabasal keratinocytes in the epidermis of the ear, potentially via moderation of expression and localization of keratins and their partner proteins. Plays a role in the establishment of the epidermal barrier on plantar skin. This chain is Keratin, type II cytoskeletal 2 epidermal, found in Rattus norvegicus (Rat).